The following is a 142-amino-acid chain: Hemoglobin subunit alpha (142 aa).

In terms of domain architecture, Globin spans 2–142 (VLSPADKTNV…VSTVLTSKYR (141 aa)). A Phosphoserine modification is found at S4. N6-succinyllysine is present on K8. Phosphothreonine is present on T9. The residue at position 12 (K12) is an N6-succinyllysine. Position 17 is an N6-acetyllysine; alternate (K17). At K17 the chain carries N6-succinyllysine; alternate. At Y25 the chain carries Phosphotyrosine. Residue S36 is modified to Phosphoserine. Residue K41 is modified to N6-succinyllysine. Residue S50 is modified to Phosphoserine. H59 serves as a coordination point for O2. Heme b is bound at residue H88. A Phosphoserine modification is found at S103. Phosphothreonine is present on T109. Phosphoserine is present on residues S125 and S132. Phosphothreonine is present on residues T135 and T138. Phosphoserine is present on S139.

This sequence belongs to the globin family. In terms of assembly, heterotetramer of two alpha chains and two beta chains in adult hemoglobin A (HbA); two alpha chains and two delta chains in adult hemoglobin A2 (HbA2); two alpha chains and two epsilon chains in early embryonic hemoglobin Gower-2; two alpha chains and two gamma chains in fetal hemoglobin F (HbF). Red blood cells.

Involved in oxygen transport from the lung to the various peripheral tissues. In terms of biological role, hemopressin acts as an antagonist peptide of the cannabinoid receptor CNR1. Hemopressin-binding efficiently blocks cannabinoid receptor CNR1 and subsequent signaling. In Pan paniscus (Pygmy chimpanzee), this protein is Hemoglobin subunit alpha (HBA1).